We begin with the raw amino-acid sequence, 503 residues long: Xylan O-acetyltransferase 12 (503 aa).

Residues 1–54 are Cytoplasmic-facing; that stretch reads MWSALFSHLREVHKRSGVKEEKLIMKSPAAAGEAAGCHKPQATATNKMTVLQSP. A helical; Signal-anchor for type II membrane protein transmembrane segment spans residues 55–77; it reads LGLRTILTSLVAFFIVVSSVSLL. Residues 78 to 503 lie on the Lumenal side of the membrane; sequence FDRSQDAQAQ…EFLYAYLMHK (426 aa). Disulfide bonds link C153/C204, C175/C240, C184/C484, and C400/C480. N154, N164, N190, and N210 each carry an N-linked (GlcNAc...) asparagine glycan. A GDS motif motif is present at residues 227 to 229; it reads GDS. S229 functions as the Nucleophile in the catalytic mechanism. N-linked (GlcNAc...) asparagine glycosylation is found at N256, N268, N373, N402, and N443. The active-site Proton donor is the D479. Residues 479 to 482 carry the DXXH motif motif; that stretch reads DCTH. H482 serves as the catalytic Proton acceptor.

It belongs to the PC-esterase family. TBL subfamily.

The protein localises to the golgi apparatus membrane. Functionally, xylan acetyltransferase required for 2-O- and 3-O-monoacetylation of xylosyl residues in xylan. Catalyzes the 2-O-acetylation of xylan, followed by nonenzymatic acetyl migration to the O-3 position, resulting in products that are monoacetylated at both O-2 and O-3 positions. The polypeptide is Xylan O-acetyltransferase 12 (Oryza sativa subsp. japonica (Rice)).